A 262-amino-acid chain; its full sequence is 3-methyl-2-oxobutanoate hydroxymethyltransferase (262 aa).

2 residues coordinate Mg(2+): aspartate 42 and aspartate 81. 3-methyl-2-oxobutanoate is bound by residues 42-43, aspartate 81, and lysine 110; that span reads DS. Position 112 (glutamate 112) interacts with Mg(2+). Glutamate 180 acts as the Proton acceptor in catalysis.

The protein belongs to the PanB family. In terms of assembly, homodecamer; pentamer of dimers. Mg(2+) is required as a cofactor.

Its subcellular location is the cytoplasm. The catalysed reaction is 3-methyl-2-oxobutanoate + (6R)-5,10-methylene-5,6,7,8-tetrahydrofolate + H2O = 2-dehydropantoate + (6S)-5,6,7,8-tetrahydrofolate. It participates in cofactor biosynthesis; (R)-pantothenate biosynthesis; (R)-pantoate from 3-methyl-2-oxobutanoate: step 1/2. Catalyzes the reversible reaction in which hydroxymethyl group from 5,10-methylenetetrahydrofolate is transferred onto alpha-ketoisovalerate to form ketopantoate. This chain is 3-methyl-2-oxobutanoate hydroxymethyltransferase, found in Legionella pneumophila (strain Corby).